The chain runs to 116 residues: Protein Wnt-5b (116 aa).

Serine 1 carries O-palmitoleoyl serine; by PORCN lipidation. Asparagine 69 and asparagine 83 each carry an N-linked (GlcNAc...) asparagine glycan. Cysteines 82 and 97 form a disulfide.

This sequence belongs to the Wnt family. Palmitoleoylation is required for efficient binding to frizzled receptors. Depalmitoleoylation leads to Wnt signaling pathway inhibition.

The protein resides in the secreted. It localises to the extracellular space. It is found in the extracellular matrix. In terms of biological role, ligand for members of the frizzled family of seven transmembrane receptors. Probable developmental protein. May be a signaling molecule which affects the development of discrete regions of tissues. Is likely to signal over only few cell diameters. The protein is Protein Wnt-5b (WNT-5B) of Plestiodon skiltonianus (Western skink).